The sequence spans 831 residues: Maltodextrin phosphorylase (831 aa).

Lysine 592 is modified (N6-(pyridoxal phosphate)lysine).

It belongs to the glycogen phosphorylase family. As to quaternary structure, trimer (at 25 degrees Celsius). Requires pyridoxal 5'-phosphate as cofactor.

It catalyses the reaction [(1-&gt;4)-alpha-D-glucosyl](n) + phosphate = [(1-&gt;4)-alpha-D-glucosyl](n-1) + alpha-D-glucose 1-phosphate. Functionally, phosphorylase is an important allosteric enzyme in carbohydrate metabolism. Catalyzes the phospholytic cleavage of maltodextrins with a minimal chain length of five glucose residues to yield glucose-1-phosphate. Low activity with tetraose and no activity with triose and maltose. Long maltodextrins (8 to 15 glucose units), amylose and starch are not as good substrates as maltoheptaose. The chain is Maltodextrin phosphorylase (malP) from Thermococcus litoralis (strain ATCC 51850 / DSM 5473 / JCM 8560 / NS-C).